The following is a 105-amino-acid chain: Small ribosomal subunit protein uS17 (105 aa).

It belongs to the universal ribosomal protein uS17 family. As to quaternary structure, part of the 30S ribosomal subunit.

Functionally, one of the primary rRNA binding proteins, it binds specifically to the 5'-end of 16S ribosomal RNA. The polypeptide is Small ribosomal subunit protein uS17 (Thermus aquaticus).